Consider the following 255-residue polypeptide: GTP cyclohydrolase III (255 aa).

It belongs to the archaeal-type GTP cyclohydrolase family.

It carries out the reaction GTP + 3 H2O = 2-amino-5-formylamino-6-(5-phospho-D-ribosylamino)pyrimidin-4(3H)-one + 2 phosphate + 2 H(+). In terms of biological role, catalyzes the formation of 2-amino-5-formylamino-6-ribofuranosylamino-4(3H)-pyrimidinone ribonucleotide monophosphate and inorganic phosphate from GTP. Also has an independent pyrophosphate phosphohydrolase activity. The protein is GTP cyclohydrolase III of Methanosphaera stadtmanae (strain ATCC 43021 / DSM 3091 / JCM 11832 / MCB-3).